The primary structure comprises 259 residues: MASTSVAAAEVKAQTTQAEEPVKVVRHQEVGHKSLLQSDALYQYILETSVYPREPEPMKELPRVTAKHPWNLMTTSADEGQFLGLLLKLINAKNTMEIGVYTGYSLLSTALALPDDGKILAMDINRENYDIGLPIIEKAGVAHKIDFREGPALPVLDELLKNEDMHGSFDFVFVDRDKDNYLNYHKRLIDLVKVGGLIAYDNTLWNGSVVAPPDAPLRKYVRYYRDFVMELNKALAVDPRIEISQIPVLDGVTLCRRVY.

K33 serves as a coordination point for substrate. S-adenosyl-L-methionine contacts are provided by residues T75, E97, G99–V100, S105, D123, and A152. D175 serves as a coordination point for substrate. D175 is a binding site for a divalent metal cation. D177 serves as a coordination point for S-adenosyl-L-methionine. A divalent metal cation-binding residues include D201 and N202. N206 is a substrate binding site.

It belongs to the class I-like SAM-binding methyltransferase superfamily. Cation-dependent O-methyltransferase family. CCoAMT subfamily. Requires a divalent metal cation as cofactor.

It catalyses the reaction (E)-caffeoyl-CoA + S-adenosyl-L-methionine = (E)-feruloyl-CoA + S-adenosyl-L-homocysteine + H(+). The protein operates within aromatic compound metabolism; phenylpropanoid biosynthesis. Its function is as follows. Methylates caffeoyl-CoA to feruloyl-CoA and 5-hydroxyferuloyl-CoA to sinapoyl-CoA. Plays a role in the synthesis of feruloylated polysaccharides. Involved in the reinforcement of the plant cell wall. Also involved in the responding to wounding or pathogen challenge by the increased formation of cell wall-bound ferulic acid polymers. In Pinus taeda (Loblolly pine), this protein is Caffeoyl-CoA O-methyltransferase (CCOAOMT).